A 65-amino-acid chain; its full sequence is uncharacterized protein (65 aa).

A signal peptide spans 1–16 (MMHVCSLLVSFDVVKS).

This is an uncharacterized protein from Saccharomyces cerevisiae (strain ATCC 204508 / S288c) (Baker's yeast).